Here is a 185-residue protein sequence, read N- to C-terminus: Elongation factor P (185 aa).

It belongs to the elongation factor P family.

The protein localises to the cytoplasm. Its pathway is protein biosynthesis; polypeptide chain elongation. Involved in peptide bond synthesis. Stimulates efficient translation and peptide-bond synthesis on native or reconstituted 70S ribosomes in vitro. Probably functions indirectly by altering the affinity of the ribosome for aminoacyl-tRNA, thus increasing their reactivity as acceptors for peptidyl transferase. The polypeptide is Elongation factor P (Methylobacillus flagellatus (strain ATCC 51484 / DSM 6875 / VKM B-1610 / KT)).